We begin with the raw amino-acid sequence, 161 residues long: NAD(P)H-quinone oxidoreductase subunit I, chloroplastic (161 aa).

4Fe-4S ferredoxin-type domains follow at residues 55–84 (GRIH…VDWK) and 95–124 (LNYS…MTEE). C64, C67, C70, C74, C104, C107, C110, and C114 together coordinate [4Fe-4S] cluster.

Belongs to the complex I 23 kDa subunit family. NDH is composed of at least 16 different subunits, 5 of which are encoded in the nucleus. [4Fe-4S] cluster is required as a cofactor.

The protein resides in the plastid. It is found in the chloroplast thylakoid membrane. It catalyses the reaction a plastoquinone + NADH + (n+1) H(+)(in) = a plastoquinol + NAD(+) + n H(+)(out). The catalysed reaction is a plastoquinone + NADPH + (n+1) H(+)(in) = a plastoquinol + NADP(+) + n H(+)(out). In terms of biological role, NDH shuttles electrons from NAD(P)H:plastoquinone, via FMN and iron-sulfur (Fe-S) centers, to quinones in the photosynthetic chain and possibly in a chloroplast respiratory chain. The immediate electron acceptor for the enzyme in this species is believed to be plastoquinone. Couples the redox reaction to proton translocation, and thus conserves the redox energy in a proton gradient. The chain is NAD(P)H-quinone oxidoreductase subunit I, chloroplastic from Phaseolus vulgaris (Kidney bean).